Reading from the N-terminus, the 319-residue chain is N-acetylneuraminate lyase (319 aa).

Residues T51 and T52 each coordinate aceneuramate. Y143 acts as the Proton donor in catalysis. The Schiff-base intermediate with substrate role is filled by K173. S175, G199, D201, E202, and S218 together coordinate aceneuramate.

It belongs to the DapA family. NanA subfamily. In terms of assembly, homotetramer.

It is found in the cytoplasm. The catalysed reaction is aceneuramate = aldehydo-N-acetyl-D-mannosamine + pyruvate. Its pathway is amino-sugar metabolism; N-acetylneuraminate degradation. Catalyzes the cleavage of N-acetylneuraminic acid (sialic acid) to form pyruvate and N-acetylmannosamine via a Schiff base intermediate. It prevents sialic acids from being recycled and returning to the cell surface. Involved in the N-glycolylneuraminic acid (Neu5Gc) degradation pathway. This Sus scrofa (Pig) protein is N-acetylneuraminate lyase.